The sequence spans 62 residues: UPF0434 protein Rleg2_3773 (62 aa).

The protein belongs to the UPF0434 family.

The protein is UPF0434 protein Rleg2_3773 of Rhizobium leguminosarum bv. trifolii (strain WSM2304).